The sequence spans 191 residues: MFKNSFQSGFLSILYSIGSKPLQIWDKQIKNGHIKRITDQDIQSSVLEIMGTNVSTNFITAPADPKETLGIKLPFLVMIIKNLKKYFTFEVQVLDDKNVRRRFRASNYQSTTRVKPFICTMPMRLDEGWNQIQFNLSDFTRRAYGTNYIETLRVQIHANCRIRRIYFSDRLYSEEELPPEFKLFLPIQKQG.

The protein belongs to the CFAP20 family.

The protein resides in the cytoplasm. Its subcellular location is the cytoskeleton. The protein localises to the cilium basal body. It localises to the cell projection. It is found in the cilium. The protein resides in the cilium axoneme. Functionally, cilium- and flagellum-specific protein required for axonemal structure organization and motility. Microtubule inner protein (MIP) part of the dynein-decorated doublet microtubules (DMTs) in cilia axoneme, which is required for motile cilia beating. May also play a role in cortical organization of basal body. In Paramecium tetraurelia, this protein is Cilia- and flagella-associated protein 20 (CFAP20).